A 352-amino-acid polypeptide reads, in one-letter code: Ion-translocating oxidoreductase complex subunit D (352 aa).

Transmembrane regions (helical) follow at residues 20–40 (IMLL…WFFG), 42–62 (GTLV…ALVL), 89–109 (IPPL…VIIA), and 123–143 (PAMI…TSWL). T187 carries the FMN phosphoryl threonine modification. The next 5 membrane-spanning stretches (helical) occupy residues 214–234 (ILAG…GVWL), 242–262 (WHIP…GWLF), 267–287 (LAAP…FFIL), 301–321 (LIFG…GGYP), and 322–342 (DGVA…DYYT).

Belongs to the NqrB/RnfD family. In terms of assembly, the complex is composed of six subunits: RsxA, RsxB, RsxC, RsxD, RsxE and RsxG. FMN serves as cofactor.

It is found in the cell inner membrane. Part of a membrane-bound complex that couples electron transfer with translocation of ions across the membrane. Required to maintain the reduced state of SoxR. In Escherichia coli O81 (strain ED1a), this protein is Ion-translocating oxidoreductase complex subunit D.